A 182-amino-acid chain; its full sequence is Oligoribonuclease (182 aa).

The Exonuclease domain maps to 8–171 (LIWIDLEMTG…DDIRESIKEL (164 aa)). Residue Tyr-129 is part of the active site.

The protein belongs to the oligoribonuclease family.

The protein localises to the cytoplasm. Its function is as follows. 3'-to-5' exoribonuclease specific for small oligoribonucleotides. This chain is Oligoribonuclease, found in Haemophilus influenzae (strain PittGG).